The chain runs to 382 residues: p21-activated protein kinase-interacting protein 1 (382 aa).

WD repeat units lie at residues 37 to 77, 80 to 120, 122 to 160, 202 to 240, and 243 to 284; these read THHS…EHGA, HHAG…KTFK, HRGH…SAFI, TNGK…CLCE, and AHEN…KVPP. Residues 313-382 are disordered; the sequence is LPPAAEPCPD…MSEKKRKKKM (70 aa). Residues 352–363 show a composition bias toward polar residues; the sequence is DSKQPTKGNSPV. Positions 365–382 are enriched in basic residues; the sequence is AKKRKMATMSEKKRKKKM.

As to quaternary structure, interacts with PAK1.

The protein localises to the nucleus. It is found in the nucleolus. Its function is as follows. Negatively regulates the PAK1 kinase. PAK1 is a member of the PAK kinase family, which has been shown to play a positive role in the regulation of signaling pathways involving MAPK8 and RELA. PAK1 exists as an inactive homodimer, which is activated by binding of small GTPases such as CDC42 to an N-terminal regulatory domain. PAK1IP1 also binds to the N-terminus of PAK1, and inhibits the specific activation of PAK1 by CDC42. May be involved in ribosomal large subunit assembly. This is p21-activated protein kinase-interacting protein 1 (Pak1ip1) from Mus musculus (Mouse).